We begin with the raw amino-acid sequence, 393 residues long: S-adenosylmethionine synthase 1 (393 aa).

E9 lines the Mg(2+) pocket. H15 serves as a coordination point for ATP. Position 43 (E43) interacts with K(+). Residues E56 and Q99 each coordinate L-methionine. Residues 167-169, 235-238, D246, 252-253, A269, K273, and K277 each bind ATP; these read DGK, SGRF, and RK. D246 is an L-methionine binding site. Residue K277 coordinates L-methionine.

It belongs to the AdoMet synthase family. Homotetramer. Mn(2+) serves as cofactor. Mg(2+) is required as a cofactor. Requires Co(2+) as cofactor. It depends on K(+) as a cofactor. Mostly expressed in stems.

It localises to the cytoplasm. It carries out the reaction L-methionine + ATP + H2O = S-adenosyl-L-methionine + phosphate + diphosphate. It participates in amino-acid biosynthesis; S-adenosyl-L-methionine biosynthesis; S-adenosyl-L-methionine from L-methionine: step 1/1. Functionally, catalyzes the formation of S-adenosylmethionine from methionine and ATP. The reaction comprises two steps that are both catalyzed by the same enzyme: formation of S-adenosylmethionine (AdoMet) and triphosphate, and subsequent hydrolysis of the triphosphate. This Solanum lycopersicum (Tomato) protein is S-adenosylmethionine synthase 1 (SAM1).